We begin with the raw amino-acid sequence, 518 residues long: Motile sperm domain-containing protein 2 (518 aa).

Residues 1–496 (MAENHAQNKA…QVQRCIWFQQ (496 aa)) are Cytoplasmic-facing. One can recognise a CRAL-TRIO domain in the interval 82-239 (ESSIPRWLLE…HMGGTDPFKY (158 aa)). The segment at 252–308 (PLCENGPITSEDETSSKEDIESDGKETLETISNEEQTPLLKKINPTESTSKAEENEK) is disordered. Residues 265–279 (TSSKEDIESDGKETL) show a composition bias toward basic and acidic residues. The MSP domain occupies 327 to 445 (LLHISPAEEL…MEHRLRCHTV (119 aa)). The tract at residues 365-366 (RT) is required for FFAT motif binding and phosphorylated FFAT motif binding. Residues 497 to 518 (LLLSLTMLLLAFVTSFFYLLYS) traverse the membrane as a helical; Anchor for type IV membrane protein segment.

Homooligomer. Interacts (via MSP domain) with STARD3NL (via FFAT motif), RMDN3 (via FFAT motif), OSBPL1A (via FFAT motif) and CERT1 (via FFAT motif). Interacts (via MSP domain) with STARD3 (via phosphorylated FFAT motif); this interaction depends on the critical phosphorylation of STARD3 on 'Ser-209'. Interacts with RB1CC1 (via phosphorylated FFAT motif), MIGA2 (via phosphorylated FFAT motif) and OSBPL1A (via FFAT motif). In terms of tissue distribution, highly expressed in CD14(+) monocytes, and at lower levels in neutrophils. Does not show significant expression in B-cells or T-cells.

Its subcellular location is the endoplasmic reticulum membrane. Functionally, endoplasmic reticulum-anchored protein that mediates the formation of contact sites between the endoplasmic (ER) and endosomes, mitochondria or Golgi through interaction with conventional- and phosphorylated-FFAT-containing organelle-bound proteins. In addition, forms endoplasmic reticulum (ER)-lipid droplets (LDs) contacts through a direct protein-membrane interaction and participates in LDs homeostasis. The attachment mechanism involves an amphipathic helix that has an affinity for lipid packing defects present at the surface of LDs. Promotes migration of primary monocytes and neutrophils, in response to various chemokines. In Homo sapiens (Human), this protein is Motile sperm domain-containing protein 2.